Reading from the N-terminus, the 288-residue chain is Polyamine aminopropyltransferase (288 aa).

The PABS domain maps to 9–238 (ETLHDQFGQY…GIMTFAWATD (230 aa)). S-methyl-5'-thioadenosine is bound at residue Gln-33. Residues His-64 and Asp-88 each contribute to the spermidine site. S-methyl-5'-thioadenosine-binding positions include Glu-108 and 140 to 141 (DG). Residue Asp-158 is the Proton acceptor of the active site. 158–161 (DCTD) is a spermidine binding site. Pro-165 contributes to the S-methyl-5'-thioadenosine binding site.

It belongs to the spermidine/spermine synthase family. Homodimer or homotetramer.

The protein resides in the cytoplasm. The enzyme catalyses S-adenosyl 3-(methylsulfanyl)propylamine + putrescine = S-methyl-5'-thioadenosine + spermidine + H(+). Its pathway is amine and polyamine biosynthesis; spermidine biosynthesis; spermidine from putrescine: step 1/1. In terms of biological role, catalyzes the irreversible transfer of a propylamine group from the amino donor S-adenosylmethioninamine (decarboxy-AdoMet) to putrescine (1,4-diaminobutane) to yield spermidine. The protein is Polyamine aminopropyltransferase of Shigella boydii serotype 18 (strain CDC 3083-94 / BS512).